Reading from the N-terminus, the 384-residue chain is 8-amino-7-oxononanoate synthase (384 aa).

Arg-21 lines the substrate pocket. Pyridoxal 5'-phosphate is bound at residue Gly-108–Phe-109. Residue His-133 coordinates substrate. Pyridoxal 5'-phosphate contacts are provided by Ser-179, His-207, and Thr-233. Residue Lys-236 is modified to N6-(pyridoxal phosphate)lysine. A substrate-binding site is contributed by Thr-352.

The protein belongs to the class-II pyridoxal-phosphate-dependent aminotransferase family. BioF subfamily. Homodimer. It depends on pyridoxal 5'-phosphate as a cofactor.

It catalyses the reaction 6-carboxyhexanoyl-[ACP] + L-alanine + H(+) = (8S)-8-amino-7-oxononanoate + holo-[ACP] + CO2. It participates in cofactor biosynthesis; biotin biosynthesis. Functionally, catalyzes the decarboxylative condensation of pimeloyl-[acyl-carrier protein] and L-alanine to produce 8-amino-7-oxononanoate (AON), [acyl-carrier protein], and carbon dioxide. This is 8-amino-7-oxononanoate synthase from Escherichia fergusonii (strain ATCC 35469 / DSM 13698 / CCUG 18766 / IAM 14443 / JCM 21226 / LMG 7866 / NBRC 102419 / NCTC 12128 / CDC 0568-73).